Consider the following 575-residue polypeptide: Dual specificity protein phosphatase YVH1 (575 aa).

The interval lysine 185–lysine 213 is disordered. A compositionally biased stretch (low complexity) spans asparagine 187–asparagine 208. Positions asparagine 283–threonine 435 constitute a Tyrosine-protein phosphatase domain. Cysteine 379 acts as the Phosphocysteine intermediate in catalysis. The Zn(2+) site is built by cysteine 476 and cysteine 530.

The protein belongs to the protein-tyrosine phosphatase family. Non-receptor class dual specificity subfamily. As to quaternary structure, interacts with PES. Zn(2+) is required as a cofactor.

It localises to the cytoplasm. It is found in the nucleus. The catalysed reaction is O-phospho-L-tyrosyl-[protein] + H2O = L-tyrosyl-[protein] + phosphate. It carries out the reaction O-phospho-L-seryl-[protein] + H2O = L-seryl-[protein] + phosphate. In terms of biological role, dual specificity protein phosphatase which dephosphorylates both phosphotyrosine and phosphoserine residues. This Plasmodium falciparum (isolate 3D7) protein is Dual specificity protein phosphatase YVH1.